The primary structure comprises 417 residues: L-rhamnose isomerase (417 aa).

Mn(2+) contacts are provided by His-261, Asp-293, and Asp-295.

Belongs to the rhamnose isomerase family. It depends on Mn(2+) as a cofactor.

Its subcellular location is the cytoplasm. It carries out the reaction L-rhamnopyranose = L-rhamnulose. It functions in the pathway carbohydrate degradation; L-rhamnose degradation; glycerone phosphate from L-rhamnose: step 1/3. Functionally, catalyzes the interconversion of L-rhamnose and L-rhamnulose. This chain is L-rhamnose isomerase, found in Oceanobacillus iheyensis (strain DSM 14371 / CIP 107618 / JCM 11309 / KCTC 3954 / HTE831).